Consider the following 199-residue polypeptide: ATP-dependent Clp protease proteolytic subunit (199 aa).

Serine 98 serves as the catalytic Nucleophile. Histidine 123 is an active-site residue.

This sequence belongs to the peptidase S14 family. As to quaternary structure, fourteen ClpP subunits assemble into 2 heptameric rings which stack back to back to give a disk-like structure with a central cavity, resembling the structure of eukaryotic proteasomes.

The protein resides in the cytoplasm. It catalyses the reaction Hydrolysis of proteins to small peptides in the presence of ATP and magnesium. alpha-casein is the usual test substrate. In the absence of ATP, only oligopeptides shorter than five residues are hydrolyzed (such as succinyl-Leu-Tyr-|-NHMec, and Leu-Tyr-Leu-|-Tyr-Trp, in which cleavage of the -Tyr-|-Leu- and -Tyr-|-Trp bonds also occurs).. Functionally, cleaves peptides in various proteins in a process that requires ATP hydrolysis. Has a chymotrypsin-like activity. Plays a major role in the degradation of misfolded proteins. This is ATP-dependent Clp protease proteolytic subunit from Ehrlichia chaffeensis (strain ATCC CRL-10679 / Arkansas).